The chain runs to 156 residues: 6,7-dimethyl-8-ribityllumazine synthase (156 aa).

Residues phenylalanine 25, 59-61, and 83-85 each bind 5-amino-6-(D-ribitylamino)uracil; these read AWE and AVI. (2S)-2-hydroxy-3-oxobutyl phosphate is bound at residue 88-89; sequence ST. Histidine 91 (proton donor) is an active-site residue. Asparagine 116 contributes to the 5-amino-6-(D-ribitylamino)uracil binding site. Residue arginine 130 participates in (2S)-2-hydroxy-3-oxobutyl phosphate binding.

Belongs to the DMRL synthase family. In terms of assembly, forms an icosahedral capsid composed of 60 subunits, arranged as a dodecamer of pentamers.

The enzyme catalyses (2S)-2-hydroxy-3-oxobutyl phosphate + 5-amino-6-(D-ribitylamino)uracil = 6,7-dimethyl-8-(1-D-ribityl)lumazine + phosphate + 2 H2O + H(+). It participates in cofactor biosynthesis; riboflavin biosynthesis; riboflavin from 2-hydroxy-3-oxobutyl phosphate and 5-amino-6-(D-ribitylamino)uracil: step 1/2. In terms of biological role, catalyzes the formation of 6,7-dimethyl-8-ribityllumazine by condensation of 5-amino-6-(D-ribitylamino)uracil with 3,4-dihydroxy-2-butanone 4-phosphate. This is the penultimate step in the biosynthesis of riboflavin. The protein is 6,7-dimethyl-8-ribityllumazine synthase of Acinetobacter baumannii (strain AB0057).